The chain runs to 430 residues: Zinc carboxypeptidase A 1 (430 aa).

Residues 1 to 22 form the signal peptide; it reads MSLNKCLLFALLAIVASASVSA. A Peptidase M14 domain is found at 124–423; it reads QYYELDDTYA…DSIVAMATEV (300 aa). Zn(2+) contacts are provided by H187 and E190. A disulfide bond links C252 and C275. H311 contacts Zn(2+). E386 functions as the Proton donor/acceptor in the catalytic mechanism.

This sequence belongs to the peptidase M14 family. It depends on Zn(2+) as a cofactor.

The protein localises to the secreted. This Drosophila melanogaster (Fruit fly) protein is Zinc carboxypeptidase A 1.